The primary structure comprises 147 residues: 3-dehydroquinate dehydratase (147 aa).

Catalysis depends on Tyr23, which acts as the Proton acceptor. The substrate site is built by Asn74, His80, and Asp87. Residue His100 is the Proton donor of the active site. Residues 101 to 102 and Arg111 each bind substrate; that span reads LS.

The protein belongs to the type-II 3-dehydroquinase family. In terms of assembly, homododecamer.

It carries out the reaction 3-dehydroquinate = 3-dehydroshikimate + H2O. The protein operates within metabolic intermediate biosynthesis; chorismate biosynthesis; chorismate from D-erythrose 4-phosphate and phosphoenolpyruvate: step 3/7. In terms of biological role, catalyzes a trans-dehydration via an enolate intermediate. This is 3-dehydroquinate dehydratase from Clostridium botulinum (strain 657 / Type Ba4).